Reading from the N-terminus, the 273-residue chain is Hydroxyethylthiazole kinase (273 aa).

Met-49 is a binding site for substrate. Residues Arg-125 and Thr-171 each coordinate ATP. Gly-198 is a substrate binding site.

Belongs to the Thz kinase family. Mg(2+) serves as cofactor.

It catalyses the reaction 5-(2-hydroxyethyl)-4-methylthiazole + ATP = 4-methyl-5-(2-phosphooxyethyl)-thiazole + ADP + H(+). The protein operates within cofactor biosynthesis; thiamine diphosphate biosynthesis; 4-methyl-5-(2-phosphoethyl)-thiazole from 5-(2-hydroxyethyl)-4-methylthiazole: step 1/1. Functionally, catalyzes the phosphorylation of the hydroxyl group of 4-methyl-5-beta-hydroxyethylthiazole (THZ). The chain is Hydroxyethylthiazole kinase from Desulforudis audaxviator (strain MP104C).